The primary structure comprises 103 residues: N(4)-acetylcytidine amidohydrolase (103 aa).

The 87-residue stretch at 7 to 93 (TFFERFEQDI…VIAEIYPGLE (87 aa)) folds into the ASCH domain. The active-site Proton acceptor is Lys21. Thr24 functions as the Nucleophile in the catalytic mechanism. The Proton donor role is filled by Glu74.

The protein belongs to the N(4)-acetylcytidine amidohydrolase family.

The enzyme catalyses N(4)-acetylcytidine + H2O = cytidine + acetate + H(+). It catalyses the reaction N(4)-acetyl-2'-deoxycytidine + H2O = 2'-deoxycytidine + acetate + H(+). The catalysed reaction is N(4)-acetylcytosine + H2O = cytosine + acetate + H(+). Catalyzes the hydrolysis of N(4)-acetylcytidine (ac4C). The polypeptide is N(4)-acetylcytidine amidohydrolase (Shewanella putrefaciens (strain CN-32 / ATCC BAA-453)).